Consider the following 179-residue polypeptide: uncharacterized protein (179 aa).

This is an uncharacterized protein from Escherichia coli (strain K12).